The primary structure comprises 79 residues: Dolichyl-diphosphooligosaccharide--protein glycosyltransferase subunit TMEM258 (79 aa).

2 helical membrane passes run 17 to 37 and 55 to 75; these read VFPH…AWFF and LISL…LLWV.

It belongs to the OST5 family. In terms of assembly, component of the oligosaccharyltransferase (OST) complex.

Its subcellular location is the membrane. The protein localises to the endoplasmic reticulum. It localises to the cytoplasm. The protein operates within protein modification; protein glycosylation. Its function is as follows. Subunit of the oligosaccharyl transferase (OST) complex that catalyzes the initial transfer of a defined glycan (Glc(3)Man(9)GlcNAc(2) in eukaryotes) from the lipid carrier dolichol-pyrophosphate to an asparagine residue within an Asn-X-Ser/Thr consensus motif in nascent polypeptide chains, the first step in protein N-glycosylation. N-glycosylation occurs cotranslationally and the complex associates with the Sec61 complex at the channel-forming translocon complex that mediates protein translocation across the endoplasmic reticulum (ER). All subunits are required for a maximal enzyme activity. The polypeptide is Dolichyl-diphosphooligosaccharide--protein glycosyltransferase subunit TMEM258 (Xenopus laevis (African clawed frog)).